The sequence spans 366 residues: NADH-quinone oxidoreductase subunit D (366 aa).

This sequence belongs to the complex I 49 kDa subunit family. In terms of assembly, NDH-1 is composed of 14 different subunits. Subunits NuoB, C, D, E, F, and G constitute the peripheral sector of the complex.

It is found in the cell membrane. The enzyme catalyses a quinone + NADH + 5 H(+)(in) = a quinol + NAD(+) + 4 H(+)(out). Its function is as follows. NDH-1 shuttles electrons from NADH, via FMN and iron-sulfur (Fe-S) centers, to quinones in the respiratory chain. The immediate electron acceptor for the enzyme in this species is believed to be a menaquinone. Couples the redox reaction to proton translocation (for every two electrons transferred, four hydrogen ions are translocated across the cytoplasmic membrane), and thus conserves the redox energy in a proton gradient. The chain is NADH-quinone oxidoreductase subunit D from Bacillus thuringiensis subsp. konkukian (strain 97-27).